Consider the following 2157-residue polypeptide: Mediator of RNA polymerase II transcription subunit 12-like protein (2157 aa).

Positions M1–Q31 are disordered. T462 is modified (phosphothreonine). Basic and acidic residues predominate over residues E1437 to K1456. 3 disordered regions span residues E1437–S1461, R1724–T1807, and I2040–F2157. Over residues T1771–S1780 the composition is skewed to basic residues. Composition is skewed to low complexity over residues P2063–Q2076, Q2083–A2101, and R2116–Q2136. Residues K2137 to V2148 show a composition bias toward polar residues.

It belongs to the Mediator complex subunit 12 family. In terms of assembly, may be a component of the Mediator complex, which is known to be composed of MED1, MED4, MED6, MED7, MED8, MED9, MED10, MED11, MED12, MED13, MED13L, MED14, MED15, MED16, MED17, MED18, MED19, MED20, MED21, MED22, MED23, MED24, MED25, MED26, MED27, MED29, MED30, MED31, CCNC, CDK8 and CDC2L6/CDK11. The MED12, MED13, CCNC and CDK8 subunits form a distinct module termed the CDK8 module. Mediator containing the CDK8 module is less active than Mediator lacking this module in supporting transcriptional activation. Individual preparations of the Mediator complex lacking one or more distinct subunits have been variously termed ARC, CRSP, DRIP, PC2, SMCC and TRAP.

The protein localises to the nucleus. Functionally, may be a component of the Mediator complex, a coactivator involved in the regulated transcription of nearly all RNA polymerase II-dependent genes. Mediator functions as a bridge to convey information from gene-specific regulatory proteins to the basal RNA polymerase II transcription machinery. Mediator is recruited to promoters by direct interactions with regulatory proteins and serves as a scaffold for the assembly of a functional preinitiation complex with RNA polymerase II and the general transcription factors. This is Mediator of RNA polymerase II transcription subunit 12-like protein (Med12l) from Mus musculus (Mouse).